We begin with the raw amino-acid sequence, 189 residues long: Casparian strip membrane protein 1 (189 aa).

At 1-42 (MEKNESSAIEIAESSKERKGKAPLLAAAVGHDRAAGYKRGVS) the chain is on the cytoplasmic side. The chain crosses the membrane as a helical span at residues 43–63 (IFDLILRISAATAALAATIVM). Residues 64 to 90 (GTTEQTLPFFTQFFQFRAQYDDLPTFT) are Extracellular-facing. A helical membrane pass occupies residues 91–111 (FFVVGMAIVTGYLILSVPLSI). Residues 112 to 130 (VCIARPVAIGPRFLLIVCD) are Cytoplasmic-facing. The chain crosses the membrane as a helical span at residues 131-151 (TVTAVLATSAAGSSAAIVYLA). The Extracellular segment spans residues 152–189 (HNGNSDANWLAICQQFNDFCQRVSGAVVAAFVAVVCSS).

The protein belongs to the Casparian strip membrane proteins (CASP) family. In terms of assembly, homodimer and heterodimers.

Its subcellular location is the cell membrane. Functionally, regulates membrane-cell wall junctions and localized cell wall deposition. Required for establishment of the Casparian strip membrane domain (CSD) and the subsequent formation of Casparian strips, a cell wall modification of the root endodermis that determines an apoplastic barrier between the intraorganismal apoplasm and the extraorganismal apoplasm and prevents lateral diffusion. This chain is Casparian strip membrane protein 1, found in Striga asiatica (Asiatic witchweed).